We begin with the raw amino-acid sequence, 1058 residues long: Ubiquitin-like modifier-activating enzyme 1 (1058 aa).

The tract at residues Met1–Glu47 is disordered. Ser2 bears the N-acetylserine mark. Residues Ser4, Ser13, Ser21, Ser24, and Ser46 each carry the phosphoserine modification. The segment covering Ser21–Thr38 has biased composition (polar residues). Phosphotyrosine is present on Tyr55. Repeat copies occupy residues Gly63–Phe199 and Gly459–Ile611. The interval Gly63 to Ile611 is 2 approximate repeats. ATP-binding positions include Ala478, Asp504, Arg515, Lys528, and Asp576–Asn577. The residue at position 528 (Lys528) is an N6-succinyllysine. Cys632 (glycyl thioester intermediate) is an active-site residue. At Lys671 the chain carries N6-acetyllysine. Thr800 bears the Phosphothreonine mark. Phosphoserine is present on residues Ser810, Ser816, Ser820, and Ser835. Lys980 carries the N6-acetyllysine modification.

It belongs to the ubiquitin-activating E1 family. Monomer. Ubiquitous.

It localises to the cytoplasm. The protein localises to the mitochondrion. The protein resides in the nucleus. The catalysed reaction is ATP + ubiquitin + [E1 ubiquitin-activating enzyme]-L-cysteine = AMP + diphosphate + S-ubiquitinyl-[E1 ubiquitin-activating enzyme]-L-cysteine.. The protein operates within protein modification; protein ubiquitination. In terms of biological role, catalyzes the first step in ubiquitin conjugation to mark cellular proteins for degradation through the ubiquitin-proteasome system. Activates ubiquitin by first adenylating its C-terminal glycine residue with ATP, and thereafter linking this residue to the side chain of a cysteine residue in E1, yielding a ubiquitin-E1 thioester and free AMP. Essential for the formation of radiation-induced foci, timely DNA repair and for response to replication stress. Promotes the recruitment of TP53BP1 and BRCA1 at DNA damage sites. This is Ubiquitin-like modifier-activating enzyme 1 (UBA1) from Oryctolagus cuniculus (Rabbit).